The sequence spans 332 residues: Phosphate acyltransferase (332 aa).

The protein belongs to the PlsX family. As to quaternary structure, homodimer. Probably interacts with PlsY.

It localises to the cytoplasm. It carries out the reaction a fatty acyl-[ACP] + phosphate = an acyl phosphate + holo-[ACP]. It functions in the pathway lipid metabolism; phospholipid metabolism. In terms of biological role, catalyzes the reversible formation of acyl-phosphate (acyl-PO(4)) from acyl-[acyl-carrier-protein] (acyl-ACP). This enzyme utilizes acyl-ACP as fatty acyl donor, but not acyl-CoA. This chain is Phosphate acyltransferase, found in Clostridium novyi (strain NT).